Here is a 612-residue protein sequence, read N- to C-terminus: Elongation factor 4 (612 aa).

In terms of domain architecture, tr-type G spans 12–194 (SRIRNFSIIA…QIVEKVPAPA (183 aa)). GTP contacts are provided by residues 24-29 (DHGKST) and 141-144 (NKID).

Belongs to the TRAFAC class translation factor GTPase superfamily. Classic translation factor GTPase family. LepA subfamily.

The protein resides in the cell membrane. The enzyme catalyses GTP + H2O = GDP + phosphate + H(+). Required for accurate and efficient protein synthesis under certain stress conditions. May act as a fidelity factor of the translation reaction, by catalyzing a one-codon backward translocation of tRNAs on improperly translocated ribosomes. Back-translocation proceeds from a post-translocation (POST) complex to a pre-translocation (PRE) complex, thus giving elongation factor G a second chance to translocate the tRNAs correctly. Binds to ribosomes in a GTP-dependent manner. The protein is Elongation factor 4 of Bacillus pumilus (strain SAFR-032).